A 164-amino-acid chain; its full sequence is UPF0478 protein SSP1024 (164 aa).

A helical membrane pass occupies residues 7–27 (IAGIIAAVAFLILVIGIVVVL). Positions 136–164 (RNRRDSANYKTSSVANETNHSYTTRVDNK) are disordered. Over residues 143-164 (NYKTSSVANETNHSYTTRVDNK) the composition is skewed to polar residues.

This sequence belongs to the UPF0478 family.

It localises to the cell membrane. The protein is UPF0478 protein SSP1024 of Staphylococcus saprophyticus subsp. saprophyticus (strain ATCC 15305 / DSM 20229 / NCIMB 8711 / NCTC 7292 / S-41).